The primary structure comprises 470 residues: Serine hydroxymethyltransferase, cytosolic (470 aa).

Positions 1 to 11 are enriched in polar residues; it reads MSAYALSQSHR. Positions 1-23 are disordered; sequence MSAYALSQSHRQLTEGHLKDTDP. Ser-2 bears the N-acetylserine mark. Basic and acidic residues predominate over residues 12 to 23; the sequence is QLTEGHLKDTDP. Lys-249 is modified (N6-(pyridoxal phosphate)lysine).

Belongs to the SHMT family. As to quaternary structure, homotetramer. Pyridoxal 5'-phosphate serves as cofactor.

The protein resides in the cytoplasm. The catalysed reaction is (6R)-5,10-methylene-5,6,7,8-tetrahydrofolate + glycine + H2O = (6S)-5,6,7,8-tetrahydrofolate + L-serine. The protein operates within one-carbon metabolism; tetrahydrofolate interconversion. Interconversion of serine and glycine. The polypeptide is Serine hydroxymethyltransferase, cytosolic (SHM2) (Candida albicans (strain SC5314 / ATCC MYA-2876) (Yeast)).